The primary structure comprises 303 residues: Putative F-box protein At5g62060 (303 aa).

The F-box domain occupies Lys27–Ile74.

The polypeptide is Putative F-box protein At5g62060 (Arabidopsis thaliana (Mouse-ear cress)).